We begin with the raw amino-acid sequence, 352 residues long: Plant intracellular Ras-group-related LRR protein 1 (352 aa).

Positions 1–25 are disordered; that stretch reads MREMGEKRRRGHLNPAGFAGGLHDH. LRR repeat units follow at residues 29 to 52, 53 to 75, 77 to 99, 100 to 122, 124 to 146, 147 to 169, 171 to 192, 195 to 217, 218 to 241, and 243 to 263; these read KNEE…TMSL, GQVT…IIAR, LNVV…IGCL, SKLK…IEEC, ALEE…GFEL, HSLR…TSHM, ALRA…LENL, LEAL…VGLL, ASLR…GCLT, and LARF…VVEQ. Positions 264–271 match the GVYW; degenerate motif; that stretch reads GLDAMRAY.

The protein belongs to the SHOC2 family. Widely expressed but at a lower level in seedlings and stems.

Leucine-rich repeat protein that likely mediates protein interactions, possibly in the context of signal transduction. This Oryza sativa subsp. japonica (Rice) protein is Plant intracellular Ras-group-related LRR protein 1 (IRL1).